Reading from the N-terminus, the 478-residue chain is Nuclear distribution protein PAC1 (478 aa).

Residues 9 to 41 (QAEELHKAMIAYLLSANLPKSAAALREELADSV) enclose the LisH domain. The stretch at 60–87 (TSVVRLQKKIMDLESRNNALQSELDSAT) forms a coiled coil. WD repeat units follow at residues 113–154 (SHRE…RTIK), 156–196 (HTKA…KNIR), 200–247 (GHDH…CVKT), 250–289 (GHVD…TKST), 292–352 (GHEH…IKTL), 354–393 (GHDN…KCVR), 398–439 (AHGH…GASA), and 440–477 (INGV…RVFA).

This sequence belongs to the WD repeat LIS1/nudF family. In terms of assembly, self-associates. Interacts with NDL1 and dynein.

Its subcellular location is the cytoplasm. The protein resides in the cytoskeleton. The protein localises to the spindle pole. Functionally, positively regulates the activity of the minus-end directed microtubule motor protein dynein. May enhance dynein-mediated microtubule sliding by targeting dynein to the microtubule plus end. Required for nuclear migration during vegetative growth as well as development. Required for retrograde early endosome (EE) transport from the hyphal tip. Required for localization of dynein to the mitotic spindle poles. Recruits additional proteins to the dynein complex at SPBs. This is Nuclear distribution protein PAC1 from Paracoccidioides brasiliensis (strain Pb03).